The sequence spans 507 residues: MESKIVSKAKRLHFVLIPLMAQGHLIPMVDISKILARQGNIVTIVTTPQNASRFAKTVDRARLESGLEINVVKFPIPYKEFGLPKDCETLDTLPSKDLLRRFYDAVDKLQEPMERFLEQQDIPPSCIISDKCLFWTSRTAKRFKIPRIVFHGMCCFSLLSSHNIHLHSPHLSVSSAVEPFPIPGMPHRIEIARAQLPGAFEKLANMDDVREKMRESESEAFGVIVNSFQELEPGYAEAYAEAINKKVWFVGPVSLCNDRMADLFDRGSNGNIAISETECLQFLDSMRPRSVLYVSLGSLCRLIPNQLIELGLGLEESGKPFIWVIKTEEKHMIELDEWLKRENFEERVRGRGIVIKGWSPQAMILSHGSTGGFLTHCGWNSTIEAICFGVPMITWPLFAEQFLNEKLIVEVLNIGVRVGVEIPVRWGDEERLGVLVKKPSVVKAIKLLMDQDCQRVDENDDDNEFVRRRRRIQELAVMAKKAVEEKGSSSINVSILIQDVLEQLSLV.

Residues serine 298, serine 359–glutamine 361, histidine 376–glutamate 384, and phenylalanine 398–glutamine 401 each bind UDP-alpha-D-glucose.

This sequence belongs to the UDP-glycosyltransferase family.

This is UDP-glycosyltransferase 73D1 (UGT73D1) from Arabidopsis thaliana (Mouse-ear cress).